Here is a 138-residue protein sequence, read N- to C-terminus: Putative pre-16S rRNA nuclease (138 aa).

This sequence belongs to the YqgF nuclease family.

The protein localises to the cytoplasm. In terms of biological role, could be a nuclease involved in processing of the 5'-end of pre-16S rRNA. The sequence is that of Putative pre-16S rRNA nuclease from Clostridium beijerinckii (strain ATCC 51743 / NCIMB 8052) (Clostridium acetobutylicum).